A 461-amino-acid chain; its full sequence is Argininosuccinate lyase (461 aa).

Belongs to the lyase 1 family. Argininosuccinate lyase subfamily.

Its subcellular location is the cytoplasm. The enzyme catalyses 2-(N(omega)-L-arginino)succinate = fumarate + L-arginine. It participates in amino-acid biosynthesis; L-arginine biosynthesis; L-arginine from L-ornithine and carbamoyl phosphate: step 3/3. In Nitrosomonas europaea (strain ATCC 19718 / CIP 103999 / KCTC 2705 / NBRC 14298), this protein is Argininosuccinate lyase.